The primary structure comprises 649 residues: Putative calpain-like cysteine protease A (649 aa).

Positions 1-3 are excised as a propeptide; that stretch reads MLT. Disordered stretches follow at residues 1-22 and 124-193; these read MLTT…SSPS and PLSN…SMPA. Positions 15–123 constitute a C2 domain; sequence TTTTSSPSSD…LHANGEAKWY (109 aa). Over residues 140–149 the composition is skewed to low complexity; it reads ITNSNNKDNN. Residues 159–172 show a composition bias toward basic and acidic residues; that stretch reads AQEKGDEDQHHSAD. 2 domain III regions span residues 458-489 and 498-633; these read EGTY…NATF and EVEQ…ISLD.

The protein belongs to the peptidase C2 family. Monomer. In terms of processing, undergoes autolytic cleavage between Pro-192 and Ala-193.

Its subcellular location is the cytoplasm. The protein localises to the cytosol. Its function is as follows. Has a weak caseinolytic activity. The protein is Putative calpain-like cysteine protease A (cplA) of Dictyostelium discoideum (Social amoeba).